A 588-amino-acid chain; its full sequence is Aspartate--tRNA ligase (588 aa).

Position 177 (E177) interacts with L-aspartate. Positions 201 to 204 are aspartate; it reads QLFK. R223 is an L-aspartate binding site. ATP contacts are provided by residues 223-225 and Q232; that span reads RDE. An L-aspartate-binding site is contributed by H451. Position 485 (E485) interacts with ATP. Residue R492 participates in L-aspartate binding. 537–540 is an ATP binding site; the sequence is GLDR.

The protein belongs to the class-II aminoacyl-tRNA synthetase family. Type 1 subfamily. In terms of assembly, homodimer.

The protein localises to the cytoplasm. The enzyme catalyses tRNA(Asp) + L-aspartate + ATP = L-aspartyl-tRNA(Asp) + AMP + diphosphate. Functionally, catalyzes the attachment of L-aspartate to tRNA(Asp) in a two-step reaction: L-aspartate is first activated by ATP to form Asp-AMP and then transferred to the acceptor end of tRNA(Asp). The polypeptide is Aspartate--tRNA ligase (Staphylococcus haemolyticus (strain JCSC1435)).